We begin with the raw amino-acid sequence, 925 residues long: GPI ethanolamine phosphate transferase 1 (925 aa).

Residues 1 to 6 lie on the Cytoplasmic side of the membrane; sequence MWNKHR. Residues 7-27 traverse the membrane as a helical segment; sequence LAFILVGLLFHLFYLRSIFDI. Residues 28 to 457 are Lumenal-facing; it reads YFVSPLVHGM…TTYNWRFIRS (430 aa). 6 N-linked (GlcNAc...) asparagine glycosylation sites follow: asparagine 90, asparagine 138, asparagine 198, asparagine 286, asparagine 312, and asparagine 358. The helical transmembrane segment at 458–478 threads the bilayer; sequence IVTLGFIGWITYSFTIFLRLF. Residues 479-492 are Cytoplasmic-facing; sequence ILEKQYAMKTSPQN. Residues 493-510 traverse the membrane as a helical segment; it reads LASFGALTAALNYVLYYQ. The Lumenal portion of the chain corresponds to 511 to 516; the sequence is RSPFNY. A helical transmembrane segment spans residues 517–537; the sequence is YMYLLFPLFFWSQILTNSTIL. The Cytoplasmic portion of the chain corresponds to 538–547; it reads HDGIREMFKG. Residues 548–568 form a helical membrane-spanning segment; that stretch reads VSMLQRIGICALIVSIYEGIV. Residues 569–574 are Lumenal-facing; sequence YGYFDR. The chain crosses the membrane as a helical span at residues 575-595; that stretch reads WIFTIIFNLLALYPFFCGIKD. At 596–599 the chain is on the cytoplasmic side; that stretch reads AKTN. The helical transmembrane segment at 600-620 threads the bilayer; the sequence is MFWGANSMALSIFTLFDAVKI. Glutamate 621 is a topological domain (lumenal). Residues 622–642 traverse the membrane as a helical segment; it reads SLTQINVSGLLLVASGLYALW. The Cytoplasmic segment spans residues 643–653; sequence RVSKKINSHTK. A helical transmembrane segment spans residues 654–674; it reads IVILLQILLLAMMLAVTNKSV. Residues 675–687 are Lumenal-facing; sequence TSLQQRAGLPTDA. A helical membrane pass occupies residues 688-708; the sequence is KIAGWVILTLSLSLMPLLHYL. Residues 709–719 are Cytoplasmic-facing; the sequence is KPSNDYQVRVL. The helical transmembrane segment at 720 to 740 threads the bilayer; the sequence is VIYLTFAPTFLILTISFESFF. At 741–775 the chain is on the lumenal side; sequence YLLFTNYLMLWIEIESKIKAQNIAKNSQNWLQLLR. A helical transmembrane segment spans residues 776–796; that stretch reads ISIIGFFLLQFAFFGTGNVAS. The Cytoplasmic segment spans residues 797 to 818; the sequence is ISSFSLDSVYRLMPVFDPFPMG. Residues 819 to 839 form a helical membrane-spanning segment; it reads ALLILKIMIPYILLSTALGIM. Residues 840–848 are Lumenal-facing; the sequence is NLKLNIKDY. The chain crosses the membrane as a helical span at residues 849 to 869; that stretch reads TVSSLILSTSDVLSLNFFYLL. Residues 870–885 lie on the Cytoplasmic side of the membrane; sequence RTEGSWLDIGVTISNY. Residues 886 to 906 form a helical membrane-spanning segment; it reads CLAILSSLFMIVLELFSHFLL. The Lumenal portion of the chain corresponds to 907–925; sequence KNVRDNGMDIAASKQQKRH.

This sequence belongs to the PIGG/PIGN/PIGO family. PIGN subfamily.

Its subcellular location is the endoplasmic reticulum membrane. The protein operates within glycolipid biosynthesis; glycosylphosphatidylinositol-anchor biosynthesis. In terms of biological role, ethanolamine phosphate transferase involved in glycosylphosphatidylinositol-anchor biosynthesis. Transfers ethanolamine phosphate to the first alpha-1,4-linked mannose of the glycosylphosphatidylinositol precursor of GPI-anchor. The protein is GPI ethanolamine phosphate transferase 1 (MCD4) of Eremothecium gossypii (strain ATCC 10895 / CBS 109.51 / FGSC 9923 / NRRL Y-1056) (Yeast).